We begin with the raw amino-acid sequence, 262 residues long: Oxidoreductase AgnL4 (262 aa).

The protein belongs to the avfA family.

Its pathway is secondary metabolite biosynthesis. Oxidoreductase; part of the gene cluster that mediates the biosynthesis of agnestins, dihydroxy-xanthone metabolites. The pathway begins with the assembly and cyclization of atrochrysone thioester by the non-reducing polyketide synthase Agnpks1. The atrochrysone carboxyl ACP thioesterase AgnL7 then breaks the thioester bond and releases the atrochrysone carboxylic acid as the first enzyme-free intermediate. The decarboxylase AgnL1 then catalyzes the concerted decarboxylation-elimination required to convert atochrysone carboxylic acid into emodin anthrone, which is further oxidized to emodin by the anthrone oxygenase AgnL2. Emodin then undergoes reduction catalyzed by the oxidoreductase AgnL4 to yield the dihydroquinone tautomer which is the substrate for reduction by the short chain dehydrogenase AgnL6 reduction to produce hydroxyketone, followed by AgnL8 dehydration and likely spontaneous autoxidation to chrysophanol. Baeyer-Villiger oxidation by the oxidase AgnL3 leads to monodictyphenone via cleavage of the C-10/C-10a bond of chrysophanol. Alternative cleavage at the C-4a/C-10 bond of chrysophanol also leads to the formation some cephalone F. Further conversion to agnestins A and B, requires reduction to dihydro-monodictyphenone, oxidation to agnestin C probably via an epoxide, and rearrangement to either agnestin A or agnestin B directly, although agnestin A or agnestin B can also interconvert. Within the cluster, AgnR1 is the only unassigned oxidoreductase present which could be involved in this conversion. However, AgnR1 seems not to be involved in this step, and thus genes involved in the proposed oxidation/reduction may be located elsewhere on the genome. Further agnestin A derivatives are probably formed by spontaneous decarboxylations, dehydrations and methanolysis reactions. The sequence is that of Oxidoreductase AgnL4 from Paecilomyces divaricatus (Penicillium divaricatum).